A 455-amino-acid chain; its full sequence is D-inositol 3-phosphate glycosyltransferase (455 aa).

A disordered region spans residues 1-25 (MSQHVSRLGGLRGRSHGHGAFGGPY). His45 contributes to the 1D-myo-inositol 3-phosphate binding site. UDP-N-acetyl-alpha-D-glucosamine-binding positions include 51–52 (QP) and Gly59. Residues 56-61 (DAGGMN), Lys114, Tyr147, Thr171, and Arg191 contribute to the 1D-myo-inositol 3-phosphate site. UDP-N-acetyl-alpha-D-glucosamine is bound by residues Arg266 and Lys271. Mg(2+)-binding residues include Tyr341, Arg342, and Ala344. UDP-N-acetyl-alpha-D-glucosamine is bound by residues Glu354 and Glu362. A Mg(2+)-binding site is contributed by Thr368.

The protein belongs to the glycosyltransferase group 1 family. MshA subfamily. Homodimer.

It carries out the reaction 1D-myo-inositol 3-phosphate + UDP-N-acetyl-alpha-D-glucosamine = 1D-myo-inositol 2-acetamido-2-deoxy-alpha-D-glucopyranoside 3-phosphate + UDP + H(+). Functionally, catalyzes the transfer of a N-acetyl-glucosamine moiety to 1D-myo-inositol 3-phosphate to produce 1D-myo-inositol 2-acetamido-2-deoxy-glucopyranoside 3-phosphate in the mycothiol biosynthesis pathway. This Streptomyces bingchenggensis (strain BCW-1) protein is D-inositol 3-phosphate glycosyltransferase.